A 362-amino-acid chain; its full sequence is RING finger protein 32 (362 aa).

The RING-type 1; atypical zinc-finger motif lies at 127 to 169 (CPICKEEFELRPQVLLSCSHVFHRACLQAFEKFTNKKTCPLCR). Residues 186–215 (RIKCVTRIQAYWRGYVVRKWYRNLRETVPP) enclose the IQ domain. The RING-type 2; atypical zinc finger occupies 293–352 (CSICLAPLSPAGGQRVGAGQRSRETALLSCSHVFHHACLLALEEFSVGDRPPFHACPLCR).

The protein resides in the cytoplasm. In terms of biological role, may play a role in sperm formation. In Macaca fascicularis (Crab-eating macaque), this protein is RING finger protein 32 (RNF32).